Here is a 499-residue protein sequence, read N- to C-terminus: Serine/threonine-protein kinase SSN3 (499 aa).

Residues 1–21 (MSHSNPPTGASGGPGSASASA) form a disordered region. The region spanning 61–442 (YQVIGFISSG…AAAALQHNFF (382 aa)) is the Protein kinase domain. ATP contacts are provided by residues 67–75 (ISSGTYGRV) and K91. The Proton acceptor role is filled by D193. Disordered stretches follow at residues 332 to 376 (SASG…SAAA) and 463 to 499 (RRVSQEDNDIRTGSVPGTKRSGMPDDSMGRPGKRVKE). Residues 365–376 (SSSSANSSSAAA) show a composition bias toward low complexity. A compositionally biased stretch (basic and acidic residues) spans 463 to 472 (RRVSQEDNDI).

Belongs to the protein kinase superfamily. CMGC Ser/Thr protein kinase family. CDC2/CDKX subfamily. Component of the SRB8-11 complex, a regulatory module of the Mediator complex. Requires Mg(2+) as cofactor.

The protein localises to the nucleus. It carries out the reaction L-seryl-[protein] + ATP = O-phospho-L-seryl-[protein] + ADP + H(+). The enzyme catalyses L-threonyl-[protein] + ATP = O-phospho-L-threonyl-[protein] + ADP + H(+). It catalyses the reaction [DNA-directed RNA polymerase] + ATP = phospho-[DNA-directed RNA polymerase] + ADP + H(+). Functionally, component of the SRB8-11 complex. The SRB8-11 complex is a regulatory module of the Mediator complex which is itself involved in regulation of basal and activated RNA polymerase II-dependent transcription. The SRB8-11 complex may be involved in the transcriptional repression of a subset of genes regulated by Mediator. It may inhibit the association of the Mediator complex with RNA polymerase II to form the holoenzyme complex. The SRB8-11 complex phosphorylates the C-terminal domain (CTD) of the largest subunit of RNA polymerase II. The chain is Serine/threonine-protein kinase SSN3 (SSN3) from Pyricularia oryzae (strain 70-15 / ATCC MYA-4617 / FGSC 8958) (Rice blast fungus).